Reading from the N-terminus, the 340-residue chain is MSANTGKPARHYLISYPRTASNLLLKILALDSQPNFSSGGFDGGYFFMPADDILTDPRIRVRARSISDWTADERAQLKETFQACFEAQQRWLESAESQGQSVFVKEHTVFFADPTARSCLQFGPSATSEPAWTVEYAGGSTHSKLNITVLPDEFLLTWLPTFLIRHPALAFPSLYRTVIKREGKESAAADNFASLLTTVEWSRSLYDFYVQNRESLPCSPDQRLEWPIVLDADDIIAHPATVTLYCDKIGMDPRQLCFNWDQLKSEELSKIEPNQLAMRMSLYQSTGIDTSKSSRGINVDDEATKWRSEFGIAVADHIEKLVRGAMADYEYLRARRLRAD.

It participates in secondary metabolite biosynthesis. Sulfotransferase; part of the gene cluster that mediates the biosynthesis of pyrrolopyrazines, secondary metabolites showing insecticidal activity. The role of ppzF within the pathway has still to be determined. The single multifunctional NRPS ppzA is sufficient to produce peramine via condensation of 1-pyrroline-5-carboxylate and arginine, N-methylation of the alpha-amino group of arginine and reduction of the thioester and the cyclization to form an iminium ion resulting in release from the peptide synthetase. Deprotonation of this intermediate and oxidation of the pyrroline ring would give rise to peramine. In Epichloe species that produce only peramine, the peramine synthetase gene is not localized in a gene cluster, in contrast to Metarhizium species that contain additional pyrrolopyrazine biosynthesis genes. The 2-oxoglutarate-Fe(II) type oxidoreductase ppzC hydroxylates peramine to yield the newly identified compound 8-hydroxyperamine whereas ppzD converts L-proline into trans-4-hydroxy-L-proline, a precursor of peramine biosynthesis. The chain is Sulfotransferase ppzF from Metarhizium majus (strain ARSEF 297).